The sequence spans 375 residues: Palmitoyltransferase PFA4 (375 aa).

Residues 1–9 (MAVLVKWPW) lie on the Cytoplasmic side of the membrane. A helical transmembrane segment spans residues 10-30 (LGVAIPCFLISFTGYFAHFFV). Topologically, residues 31-33 (LTN) are lumenal. Residues 34–54 (FLSFKELLWFQVSLSMIWISY) traverse the membrane as a helical segment. Topologically, residues 55–121 (WKAIYKNPGR…MNCVGYKNFP (67 aa)) are cytoplasmic. Residues 78–128 (NYCTKCETYKPERTHHCKRCNQCVLVMDHHCPWTMNCVGYKNFPHFIRFLF) form the DHHC domain. C108 acts as the S-palmitoyl cysteine intermediate in catalysis. Residues 122-142 (HFIRFLFWIIATTGILLHYFV) form a helical membrane-spanning segment. The Lumenal segment spans residues 143–164 (KRIKFTWVNRYATANLVSKQEL). A helical membrane pass occupies residues 165 to 185 (IFLTILTPLDAFILLTISLLF). Residues 186–375 (VRCVKNQIVN…EHFGVDVEVE (190 aa)) are Cytoplasmic-facing.

This sequence belongs to the DHHC palmitoyltransferase family. PFA4 subfamily.

It localises to the endoplasmic reticulum membrane. It carries out the reaction L-cysteinyl-[protein] + hexadecanoyl-CoA = S-hexadecanoyl-L-cysteinyl-[protein] + CoA. Functionally, mediates the reversible addition of palmitate to target proteins, thereby regulating their membrane association and biological function. The protein is Palmitoyltransferase PFA4 of Eremothecium gossypii (strain ATCC 10895 / CBS 109.51 / FGSC 9923 / NRRL Y-1056) (Yeast).